A 174-amino-acid polypeptide reads, in one-letter code: MLSVEKFRVGERVVWIGVIFSGRVQGIAFAFDRGTLMKRIHDLAEHLGKRGVSISLDVQPSDYPEKVFKVLIGELDNASFLRELSFEGVTPFEKKVYEWLTKNVKRGSVITYGDLAKALNTSPRAVGGAMKRNPYPIVVPCHRVVAHDGIGYYSSGIEEKKFLLEIEGVKEWTS.

The Nucleophile; methyl group acceptor role is filled by C141.

The protein belongs to the MGMT family.

The protein resides in the cytoplasm. The catalysed reaction is a 6-O-methyl-2'-deoxyguanosine in DNA + L-cysteinyl-[protein] = S-methyl-L-cysteinyl-[protein] + a 2'-deoxyguanosine in DNA. It catalyses the reaction a 4-O-methyl-thymidine in DNA + L-cysteinyl-[protein] = a thymidine in DNA + S-methyl-L-cysteinyl-[protein]. In terms of biological role, involved in the cellular defense against the biological effects of O6-methylguanine (O6-MeG) and O4-methylthymine (O4-MeT) in DNA. Repairs the methylated nucleobase in DNA by stoichiometrically transferring the methyl group to a cysteine residue in the enzyme. This is a suicide reaction: the enzyme is irreversibly inactivated. In Thermococcus kodakarensis (strain ATCC BAA-918 / JCM 12380 / KOD1) (Pyrococcus kodakaraensis (strain KOD1)), this protein is Methylated-DNA--protein-cysteine methyltransferase.